The chain runs to 300 residues: Ribosomal protein bS6--L-glutamate ligase (300 aa).

The ATP-grasp domain maps to 104–287; the sequence is LQLLARQGID…IAGRMIQWIE (184 aa). Residues Lys141, 178–179, Asp187, and 211–213 contribute to the ATP site; these read EY and RSN. The Mg(2+) site is built by Asp248, Glu260, and Asn262. Positions 248, 260, and 262 each coordinate Mn(2+).

Belongs to the RimK family. It depends on Mg(2+) as a cofactor. Requires Mn(2+) as cofactor.

In terms of biological role, an L-glutamate ligase that catalyzes the ATP-dependent post-translational addition of glutamate residues to the C-terminus of ribosomal protein bS6 (RpsF). Is also able to catalyze the synthesis of poly-alpha-glutamate in vitro, via ATP hydrolysis from unprotected glutamate as substrate. The number of glutamate residues added to either RpsF or to poly-alpha-glutamate changes with pH. This chain is Ribosomal protein bS6--L-glutamate ligase, found in Salmonella schwarzengrund (strain CVM19633).